The chain runs to 325 residues: Cytochrome c1, heme protein, mitochondrial (325 aa).

The N-terminal 84 residues, 1–84 (MAAAAASLRG…AMALHSAVSA (84 aa)), are a transit peptide targeting the mitochondrion. At 85 to 281 (SDLELHPPSY…TFLRWASEPE (197 aa)) the chain is on the mitochondrial intermembrane side. The region spanning 108–209 (TSIRRGFQVY…IVRARHGGED (102 aa)) is the Cytochrome c domain. Heme c-binding residues include cysteine 121, cysteine 124, and histidine 125. Serine 182 bears the Phosphoserine mark. Methionine 244 is a binding site for heme c. Residues 282-315 (HDHRKRMGLKMLMMMALLVPLVYTIKRHKWSVLK) form a helical membrane-spanning segment. Residues 316-325 (SRKLAYRPPK) are Mitochondrial matrix-facing.

It belongs to the cytochrome c family. Component of the ubiquinol-cytochrome c oxidoreductase (cytochrome b-c1 complex, complex III, CIII), a multisubunit enzyme composed of 11 subunits. The complex is composed of 3 respiratory subunits cytochrome b, cytochrome c1 and Rieske protein UQCRFS1, 2 core protein subunits UQCRC1/QCR1 and UQCRC2/QCR2, and 6 low-molecular weight protein subunits UQCRH/QCR6, UQCRB/QCR7, UQCRQ/QCR8, UQCR10/QCR9, UQCR11/QCR10 and subunit 9, the cleavage product of Rieske protein UQCRFS1. The complex exists as an obligatory dimer and forms supercomplexes (SCs) in the inner mitochondrial membrane with NADH-ubiquinone oxidoreductase (complex I, CI) and cytochrome c oxidase (complex IV, CIV), resulting in different assemblies (supercomplex SCI(1)III(2)IV(1) and megacomplex MCI(2)III(2)IV(2)). Interacts with FLVCR2; this interaction occurs in the absence of heme and is disrupted upon heme binding. Requires heme c as cofactor.

The protein resides in the mitochondrion inner membrane. It carries out the reaction a quinol + 2 Fe(III)-[cytochrome c](out) = a quinone + 2 Fe(II)-[cytochrome c](out) + 2 H(+)(out). Component of the ubiquinol-cytochrome c oxidoreductase, a multisubunit transmembrane complex that is part of the mitochondrial electron transport chain which drives oxidative phosphorylation. The respiratory chain contains 3 multisubunit complexes succinate dehydrogenase (complex II, CII), ubiquinol-cytochrome c oxidoreductase (cytochrome b-c1 complex, complex III, CIII) and cytochrome c oxidase (complex IV, CIV), that cooperate to transfer electrons derived from NADH and succinate to molecular oxygen, creating an electrochemical gradient over the inner membrane that drives transmembrane transport and the ATP synthase. The cytochrome b-c1 complex catalyzes electron transfer from ubiquinol to cytochrome c, linking this redox reaction to translocation of protons across the mitochondrial inner membrane, with protons being carried across the membrane as hydrogens on the quinol. In the process called Q cycle, 2 protons are consumed from the matrix, 4 protons are released into the intermembrane space and 2 electrons are passed to cytochrome c. Cytochrome c1 is a catalytic core subunit containing a c-type heme. It transfers electrons from the [2Fe-2S] iron-sulfur cluster of the Rieske protein to cytochrome c. The sequence is that of Cytochrome c1, heme protein, mitochondrial (CYC1) from Homo sapiens (Human).